The chain runs to 91 residues: Small ribosomal subunit protein uS19 (91 aa).

The protein belongs to the universal ribosomal protein uS19 family.

Protein S19 forms a complex with S13 that binds strongly to the 16S ribosomal RNA. In Lachnospira eligens (strain ATCC 27750 / DSM 3376 / VPI C15-48 / C15-B4) (Eubacterium eligens), this protein is Small ribosomal subunit protein uS19.